The sequence spans 538 residues: Sodium/hydrogen exchanger 1 (538 aa).

The Cytoplasmic portion of the chain corresponds to 1-19 (MLDSLVSKLPSLSTSDHAS). A helical transmembrane segment spans residues 20-40 (VVALNLFVALLCACIVLGHLL). The Vacuolar segment spans residues 41 to 45 (EENRW). The chain crosses the membrane as a helical span at residues 46 to 66 (MNESITALLIGLGTGVTILLI). Over 67-73 (SKGKSSH) the chain is Cytoplasmic. Positions 74 to 94 (LLVFSEDLFFIYLLPPIIFNA) form an intramembrane region, helical. Over 95 to 106 (GFQVKKKQFFRN) the chain is Cytoplasmic. A helical transmembrane segment spans residues 107 to 127 (FVTIMLFGAVGTIISCTIISL). The Vacuolar segment spans residues 128–146 (GVTQFFKKLDIGTFDLGDY). 2 intramembrane regions (helical) span residues 147–166 (LAIG…QVLN) and 172–192 (LLYS…VVVF). Over 193-216 (NAIQSFDLTHLNHEAAFHLLGNFL) the chain is Vacuolar. Residues 217–237 (YLFLLSTLLGAATGLISAYVI) traverse the membrane as a helical segment. Topologically, residues 238–262 (KKLYFGRHSTDREVALMMLMAYLSY) are cytoplasmic. Residues 263–283 (MLAELFDLSGILTVFFCGIVM) form a helical membrane-spanning segment. At 284–302 (SHYTWHNVTESSRITTKHT) the chain is on the vacuolar side. Asparagine 290 is a glycosylation site (N-linked (GlcNAc...) asparagine). The chain crosses the membrane as a helical span at residues 303–323 (FATLSFLAETFIFLYVGMDAL). Over 324–342 (DIDKWRSVSDTPGTSIAVS) the chain is Cytoplasmic. A helical transmembrane segment spans residues 343–363 (SILMGLVMVGRAAFVFPLSFL). The Vacuolar portion of the chain corresponds to 364-378 (SNLAKKNQSEKINFN). Asparagine 370 is a glycosylation site (N-linked (GlcNAc...) asparagine). A helical membrane pass occupies residues 379-399 (MQVVIWWSGLMRGAVSMALAY). The Cytoplasmic segment spans residues 400–413 (NKFTRAGHTDVRGN). Residues 414–434 (AIMITSTITVCLFSTVVFGML) traverse the membrane as a helical segment. Residues 435 to 538 (TKPLISYLLP…ERNPPDLSKA (104 aa)) lie on the Vacuolar side of the membrane. N-linked (GlcNAc...) asparagine glycosylation is present at asparagine 447. The interaction with CML18/CAM15 stretch occupies residues 496–518 (RTVHYYWRQFDDSFMRPVFGGRG).

It belongs to the monovalent cation:proton antiporter 1 (CPA1) transporter (TC 2.A.36) family. In terms of assembly, calcium and pH-dependent interaction with CML18/CAM15 (increases when pH decreases, better at pH 5.5 than at pH 7.5). In terms of tissue distribution, ubiquitous, with higher levels around vascular tissues and guard cells.

The protein resides in the vacuole membrane. The protein localises to the endoplasmic reticulum membrane. Its subcellular location is the golgi apparatus membrane. The enzyme catalyses Na(+)(in) + H(+)(out) = Na(+)(out) + H(+)(in). It catalyses the reaction K(+)(in) + H(+)(out) = K(+)(out) + H(+)(in). In terms of biological role, acts in low affinity electroneutral exchange of protons for cations such as Na(+) or K(+) across membranes. Can also exchange Li(+) and Cs(+) with a lower affinity. Involved in vacuolar ion compartmentalization necessary for cell volume regulation and cytoplasmic Na(+) detoxification. Required during leaves expansion, probably to stimulate epidermal cell expansion. Confers competence to grow in high salinity conditions. This is Sodium/hydrogen exchanger 1 (NHX1) from Arabidopsis thaliana (Mouse-ear cress).